We begin with the raw amino-acid sequence, 328 residues long: Phosphate acyltransferase (328 aa).

The protein belongs to the PlsX family. In terms of assembly, homodimer. Probably interacts with PlsY.

Its subcellular location is the cytoplasm. The enzyme catalyses a fatty acyl-[ACP] + phosphate = an acyl phosphate + holo-[ACP]. Its pathway is lipid metabolism; phospholipid metabolism. In terms of biological role, catalyzes the reversible formation of acyl-phosphate (acyl-PO(4)) from acyl-[acyl-carrier-protein] (acyl-ACP). This enzyme utilizes acyl-ACP as fatty acyl donor, but not acyl-CoA. The chain is Phosphate acyltransferase from Staphylococcus aureus (strain bovine RF122 / ET3-1).